Consider the following 963-residue polypeptide: Collagen alpha-1(I) chain (963 aa).

Positions 1-963 are disordered; sequence GPMGPSGPRG…PGPPGPPGPP (963 aa). The segment covering 40–54 has biased composition (basic and acidic residues); the sequence is NGDDGEAGKPGRPGE. Serine 82 bears the Phosphoserine mark. 2 stretches are compositionally biased toward low complexity: residues 90–106 and 129–142; these read DAGP…PGEN and PAGA…TGAA. Residues 144–156 are compositionally biased toward pro residues; sequence PPGPTGPAGPPGF. Residues 190–229 are compositionally biased toward low complexity; sequence AGAAGPAGNPGADGQPGAKGANGAPGIAGAPGFPGARGPS. The segment covering 296–305 has biased composition (gly residues); that stretch reads GERGGPGARG. Low complexity-rich tracts occupy residues 313-337, 349-375, 384-403, 482-495, 555-569, and 582-609; these read AGPK…PGEA, KGIT…QDGR, ARGQ…AGEP, PRGA…DGAK, SGPS…ARGA, and AGFA…KGDA. Serine 558 carries the post-translational modification Phosphoserine. Pro residues predominate over residues 611 to 623; the sequence is PPGPAGPTGPPGP. Composition is skewed to low complexity over residues 638–654, 683–692, and 702–726; these read SAGP…AGRV, ETGPAGRPGE, and AGEK…QGIA. Pro residues-rich tracts occupy residues 767–777 and 813–828; these read PPGPVGPPGIA and AGPP…PGPV. Over residues 849 to 863 the composition is skewed to low complexity; it reads IGPVGARGPAGPQGP. Over residues 864 to 878 the composition is skewed to basic and acidic residues; it reads RGDKGETGEQGDRGI. Positions 897–930 are enriched in low complexity; sequence PGEQGPSGASGPAGPRGPPGSAGAPGKDGINGIP. Residues 948-963 show a composition bias toward pro residues; that stretch reads VGPPGPPGPPGPPGPP.

This sequence belongs to the fibrillar collagen family. Trimers of one alpha 2(I) and two alpha 1(I) chains. In terms of processing, prolines at the third position of the tripeptide repeating unit (G-X-Y) are hydroxylated in some or all of the chains. Forms the fibrils of tendon, ligaments and bones. In bones, the fibrils are mineralized with calcium hydroxyapatite.

The protein resides in the secreted. Its subcellular location is the extracellular space. The protein localises to the extracellular matrix. Type I collagen is a member of group I collagen (fibrillar forming collagen). This chain is Collagen alpha-1(I) chain, found in Tapirus terrestris (Lowland tapir).